A 482-amino-acid polypeptide reads, in one-letter code: Scarecrow-like protein 3 (482 aa).

The region spanning Leu-45–Arg-479 is the GRAS domain. Residues Leu-52–Lys-115 form a leucine repeat I (LRI) region. The tract at residues Arg-134–Gly-199 is VHIID. Residues Val-165–Asp-169 carry the VHIID motif. A leucine repeat II (LRII) region spans residues Gln-209 to Gln-241. The interval Leu-250–Asn-401 is PFYRE. The segment at Glu-302–Pro-324 is disordered. Residues Met-305–Pro-324 show a composition bias toward polar residues. The segment at Ser-404–Arg-479 is SAW.

Belongs to the GRAS family. In terms of assembly, binds to zinc finger proteins MGP/IDD3, IDD4, IDD5, BIB/IDD9 and JKD/IDD10. In terms of tissue distribution, expressed in seedlings, root epidermis, leaves, flowers and siliques.

The protein resides in the nucleus. In terms of biological role, probable transcription factor involved in plant development. The polypeptide is Scarecrow-like protein 3 (Arabidopsis thaliana (Mouse-ear cress)).